Here is a 290-residue protein sequence, read N- to C-terminus: ADP-ribosylation factor-like protein 13A (290 aa).

Residues 28-35 (GLNNSGKT), 71-75 (DLNGD), and 130-133 (NKQD) each bind GTP. The tract at residues 204 to 226 (SKNNTGSGERCSSHSFSTRTGMS) is disordered.

This sequence belongs to the small GTPase superfamily. Arf family.

The chain is ADP-ribosylation factor-like protein 13A (ARL13A) from Homo sapiens (Human).